A 752-amino-acid chain; its full sequence is Neuroendocrine convertase 1 (752 aa).

Positions 1–27 (MKQRGWTLQCTAFTLFCVWCALNSVKA) are cleaved as a signal peptide. Positions 28-110 (KRQFVNEWAA…QQYEKERRKR (83 aa)) are excised as a propeptide. One can recognise a Peptidase S8 domain in the interval 129–450 (QWYLQDTRMT…FGLLNAKALV (322 aa)). The active-site Charge relay system is the Asp-167. A glycan (N-linked (GlcNAc...) asparagine) is linked at Asn-173. His-208 (charge relay system) is an active-site residue. 2 cysteine pairs are disulfide-bonded: Cys-225–Cys-374 and Cys-317–Cys-347. Ser-382 functions as the Charge relay system in the catalytic mechanism. The N-linked (GlcNAc...) asparagine glycan is linked to Asn-401. In terms of domain architecture, P/Homo B spans 460–597 (NVPEKKECII…KLILHGTSSQ (138 aa)). Residues Cys-467 and Cys-494 are joined by a disulfide bond. Residues 631–662 (PTQNSLNGNLLVPKNSSSSSVEDRRDEQVQGA) are disordered. Asn-645 carries N-linked (GlcNAc...) asparagine glycosylation.

Belongs to the peptidase S8 family. Furin subfamily. Ca(2+) is required as a cofactor.

It localises to the cytoplasmic vesicle. It is found in the secretory vesicle. The catalysed reaction is Release of protein hormones, neuropeptides and renin from their precursors, generally by hydrolysis of -Lys-Arg-|- bonds.. Involved in the processing of hormone and other protein precursors at sites comprised of pairs of basic amino acid residues. Substrates include POMC, renin, enkephalin, dynorphin, somatostatin, insulin and AGRP. The sequence is that of Neuroendocrine convertase 1 (Pcsk1) from Rattus norvegicus (Rat).